The primary structure comprises 132 residues: Ribosome-binding factor A (132 aa).

It belongs to the RbfA family. Monomer. Binds 30S ribosomal subunits, but not 50S ribosomal subunits or 70S ribosomes.

The protein resides in the cytoplasm. Its function is as follows. One of several proteins that assist in the late maturation steps of the functional core of the 30S ribosomal subunit. Associates with free 30S ribosomal subunits (but not with 30S subunits that are part of 70S ribosomes or polysomes). Required for efficient processing of 16S rRNA. May interact with the 5'-terminal helix region of 16S rRNA. The protein is Ribosome-binding factor A of Pseudomonas putida (strain ATCC 700007 / DSM 6899 / JCM 31910 / BCRC 17059 / LMG 24140 / F1).